The sequence spans 222 residues: Kinetochore protein Spc25 (222 aa).

The stretch at 51 to 86 forms a coiled coil; that stretch reads RHQRKVGKLQKVLMERREELDKRVSFIEELDRELEA.

Belongs to the SPC25 family. Component of the Ndc80 complex, which is composed of Ndc80, Nuf2 and Spc25.

The protein localises to the nucleus. Its subcellular location is the chromosome. It is found in the centromere. The protein resides in the kinetochore. Its function is as follows. Acts as a component of the essential kinetochore-associated Ndc80 complex, which is required for chromosome segregation and spindle checkpoint activity during meiosis and mitosis. Required for kinetochore integrity and the organization of stable microtubule binding sites in the outer plate of the kinetochore. Participates in SAC signaling that responds specifically to disruptions in spindle microtubule dynamics. The NDC80 complex synergistically enhances the affinity of the SKA1 complex for microtubules and may allow the NDC80 complex to track depolymerizing microtubules. The polypeptide is Kinetochore protein Spc25 (Drosophila simulans (Fruit fly)).